The following is a 347-amino-acid chain: Phenylalanine--tRNA ligase alpha subunit (347 aa).

Mg(2+) is bound at residue glutamate 261.

This sequence belongs to the class-II aminoacyl-tRNA synthetase family. Phe-tRNA synthetase alpha subunit type 1 subfamily. In terms of assembly, tetramer of two alpha and two beta subunits. It depends on Mg(2+) as a cofactor.

It is found in the cytoplasm. The catalysed reaction is tRNA(Phe) + L-phenylalanine + ATP = L-phenylalanyl-tRNA(Phe) + AMP + diphosphate + H(+). This Streptococcus equi subsp. equi (strain 4047) protein is Phenylalanine--tRNA ligase alpha subunit.